The sequence spans 476 residues: tRNA(Ile)-lysidine synthase (476 aa).

26-31 serves as a coordination point for ATP; sequence SGGSDS.

The protein belongs to the tRNA(Ile)-lysidine synthase family.

It localises to the cytoplasm. It catalyses the reaction cytidine(34) in tRNA(Ile2) + L-lysine + ATP = lysidine(34) in tRNA(Ile2) + AMP + diphosphate + H(+). Functionally, ligates lysine onto the cytidine present at position 34 of the AUA codon-specific tRNA(Ile) that contains the anticodon CAU, in an ATP-dependent manner. Cytidine is converted to lysidine, thus changing the amino acid specificity of the tRNA from methionine to isoleucine. The polypeptide is tRNA(Ile)-lysidine synthase (Bartonella quintana (strain Toulouse) (Rochalimaea quintana)).